Here is a 78-residue protein sequence, read N- to C-terminus: Vacuolar ATPase assembly integral membrane protein VMA21 (78 aa).

Topologically, residues 1–14 (MPADIPKSVVQKLV) are cytoplasmic. A helical transmembrane segment spans residues 15–35 (FFTAAMIICPVATFFICQYLF). Over 36 to 38 (SNN) the chain is Lumenal. A helical transmembrane segment spans residues 39–59 (AIISGGVSALVANIVLIGYVV). Topologically, residues 60–78 (AAFMEDTTEQEPEETKKSR) are cytoplasmic. A Prevents secretion from ER motif is present at residues 75–78 (KKSR).

Belongs to the VMA21 family.

The protein localises to the endoplasmic reticulum membrane. It localises to the endoplasmic reticulum-Golgi intermediate compartment membrane. It is found in the cytoplasmic vesicle. Its subcellular location is the COPII-coated vesicle membrane. Its function is as follows. Required for the assembly of the V0 complex of the vacuolar ATPase (V-ATPase) in the endoplasmic reticulum. The chain is Vacuolar ATPase assembly integral membrane protein VMA21 from Debaryomyces hansenii (strain ATCC 36239 / CBS 767 / BCRC 21394 / JCM 1990 / NBRC 0083 / IGC 2968) (Yeast).